A 447-amino-acid polypeptide reads, in one-letter code: KICSTOR complex protein ITFG2 (447 aa).

The stretch at 19–48 is one FG-GAP 1; atypical repeat; the sequence is FPHAICLGDVDNDTLNELVVGDTSGKVSVY. Phosphoserine is present on S104. The FG-GAP 2; atypical repeat unit spans residues 126 to 155; sequence NTKVMLISDIDGDGCRELVVGYTDRVVRAF. A Phosphoserine modification is found at S220.

Part of the KICSTOR complex composed of KPTN, ITFG2, KICS2 and SZT2. SZT2 probably serves as a link between the other three proteins in the KICSTOR complex and may mediate the direct interaction with the GATOR complex via GATOR1. The KICSTOR complex interacts directly with the GATOR1 complex and most probably indirectly with the GATOR2 complex in an amino acid-independent manner.

It localises to the lysosome membrane. Functionally, as part of the KICSTOR complex functions in the amino acid-sensing branch of the TORC1 signaling pathway. Recruits, in an amino acid-independent manner, the GATOR1 complex to the lysosomal membranes and allows its interaction with GATOR2 and the RAG GTPases. Functions upstream of the RAG GTPases and is required to negatively regulate mTORC1 signaling in absence of amino acids. In absence of the KICSTOR complex mTORC1 is constitutively localized to the lysosome and activated. The KICSTOR complex is also probably involved in the regulation of mTORC1 by glucose. The chain is KICSTOR complex protein ITFG2 from Homo sapiens (Human).